Here is a 160-residue protein sequence, read N- to C-terminus: MEYNLHDTTVLNENILSSEEREIWVLYMKVLTSAGLGDVSEWMKLDMSMPQMKVLMLLNNHGTLKVSDIAEKMGASLSNTTGLLDRLEKSGFVKRSHSEEDRRSVVVQLTENAKKIFRGLYEKGHLKLKRSLELLSPEEKQAVYEGLSILSRALENAKKE.

The region spanning 20 to 152 is the HTH marR-type domain; it reads EREIWVLYMK…VYEGLSILSR (133 aa). Residues 66-89 constitute a DNA-binding region (H-T-H motif); it reads VSDIAEKMGASLSNTTGLLDRLEK.

This is an uncharacterized protein from Bacillus subtilis (strain 168).